Consider the following 446-residue polypeptide: Methylenetetrahydrofolate--tRNA-(uracil-5-)-methyltransferase TrmFO (446 aa).

8 to 13 (GAGLAG) is an FAD binding site.

Belongs to the MnmG family. TrmFO subfamily. Requires FAD as cofactor.

It localises to the cytoplasm. It catalyses the reaction uridine(54) in tRNA + (6R)-5,10-methylene-5,6,7,8-tetrahydrofolate + NADH + H(+) = 5-methyluridine(54) in tRNA + (6S)-5,6,7,8-tetrahydrofolate + NAD(+). The catalysed reaction is uridine(54) in tRNA + (6R)-5,10-methylene-5,6,7,8-tetrahydrofolate + NADPH + H(+) = 5-methyluridine(54) in tRNA + (6S)-5,6,7,8-tetrahydrofolate + NADP(+). Functionally, catalyzes the folate-dependent formation of 5-methyl-uridine at position 54 (M-5-U54) in all tRNAs. The protein is Methylenetetrahydrofolate--tRNA-(uracil-5-)-methyltransferase TrmFO of Paracoccus denitrificans (strain Pd 1222).